The chain runs to 158 residues: ATP synthase subunit b', chloroplastic (158 aa).

A helical transmembrane segment spans residues 21 to 41 (GTLPLMALQFLILMLLLNTIF).

The protein belongs to the ATPase B chain family. F-type ATPases have 2 components, F(1) - the catalytic core - and F(0) - the membrane proton channel. F(1) has five subunits: alpha(3), beta(3), gamma(1), delta(1), epsilon(1). F(0) has four main subunits: a(1), b(1), b'(1) and c(10-14). The alpha and beta chains form an alternating ring which encloses part of the gamma chain. F(1) is attached to F(0) by a central stalk formed by the gamma and epsilon chains, while a peripheral stalk is formed by the delta, b and b' chains.

It localises to the plastid. The protein localises to the chloroplast thylakoid membrane. Its function is as follows. F(1)F(0) ATP synthase produces ATP from ADP in the presence of a proton or sodium gradient. F-type ATPases consist of two structural domains, F(1) containing the extramembraneous catalytic core and F(0) containing the membrane proton channel, linked together by a central stalk and a peripheral stalk. During catalysis, ATP synthesis in the catalytic domain of F(1) is coupled via a rotary mechanism of the central stalk subunits to proton translocation. In terms of biological role, component of the F(0) channel, it forms part of the peripheral stalk, linking F(1) to F(0). The b'-subunit is a diverged and duplicated form of b found in plants and photosynthetic bacteria. This chain is ATP synthase subunit b', chloroplastic, found in Porphyra purpurea (Red seaweed).